A 1370-amino-acid chain; its full sequence is MREKGRRKKGRTWAEAAKTVLEKYPNTPMSHKEILQVIQREGLKEIRSGTSPLACLNAMLHTNSRGEEGIFYKVPGRMGVYTLKKDVPDGVKELSECSEESSDGQSDSHSSDNSSSSDGGSNKEGRKSRWKRKVSSRLSHPPSPPSGCPSPTIPASKVISPSQKHSKKALKQALKQQQQKKKQQQCRPSMSISNQHLSLKTVKAASDSVPAKPGQMKRTKCADIDVETPDSILVNTNLRALINKHTFSVLPGDCQQRLLLLLPEVDRQVGPDGLMKLNGSALNNEFFTSAAQGWKERLSEGEFTPEMQVRIRQEIEKEKKVELWKEQFFENYYGQSSGLSLEDSQKLTASSSDPKAKKTPAEQPKSILPSEASPVRIVPVVPQSECKEEAVQIPSPSQKEENQDEARPDSKSPEPVLASASNTNELITMKPIKSPKDEGLLEQKPVACAEQESEKENHVTTTSRNNKSENQEALAISPSKSKNAGLQKPIIKPVAEASPLNPDMKMPPATVTDQIQESLKRKSSLTDEEATSSWEKRPRITENRQHQQPFQVSPQPFLNRGDRVQVRKVPPLKIPVSRISPMLFSTSQVSPRARFPISITSPYRTGARTLADIKAKAQLVEAQKAAAAAAAAAAAAASVGGTIPGPGPGGGQSPREGGERKIAGGGSAGSDPVSTNGKGPTLELAGTGSRGGTRELLPCGPQPETNMPGQAQPPGISGAQLQQTSSVPTGLASSGACTSVPLPAHIEISNSEKPNLHKATATAASPCHLQDPRSCRLEKALSPTGPPLISGASTVYFVADGTVEPKAGSNKNAPKPSALAKTTAPAPLDMTSSPVTTASLEKLPVPQISGTATSTGSAPSSSTLPAASSLKTPGTSANMNGPISRTSSSIPANNPLVTQLLQGKDVPLEQILPKPLTKIEMKTVPLTTKEEKGIGIFPGISVMESSSREEVNGRQAHLAIPQLGKPLQSKQLSQVPRPVFTAKDRKDPCIDTHQYREGLSKTTQDQLFQTLIQRAQRQSVLSFVPPSQFNFAHSGFHLEDISTSQKFMLGFAGRRTSKPAMAGHYLLNISTYGRGTENIKRTHSVNPDDRFCLSSPTEALRMGHADYKNTTGEISSKEDESDEDRVGDEQEPISVKEEPWASQSSGRHPHHGEASSTNDCLASKNGKTEAPVSEQTTLGQENYIFSRGQASDEKSLPRDFIPAAHKQMTHAVRGKTVCSSPELFNSTALSLPADSPTHQPLLLPPLQTPKLYGSPTQIGPSYRGMINVSTSSDMDHNSAIPGSQVSSNVGDVMSFSVTVTTIPASQAMNPSSHGQTIPVQTFPDDNSIEDTPSKCYCRLKAMIMCKGCGAFCHDDCIGPSKLCVSCLVVR.

One can recognise an HTH HARE-type domain in the interval 11–86 (RTWAEAAKTV…RMGVYTLKKD (76 aa)). The segment at 92 to 216 (KELSECSEES…DSVPAKPGQM (125 aa)) is disordered. Residues 103–120 (DGQSDSHSSDNSSSSDGG) show a composition bias toward low complexity. Over residues 141 to 152 (PPSPPSGCPSPT) the composition is skewed to pro residues. Ser-150 bears the Phosphoserine mark. Positions 178–182 (QQKKK) match the Nuclear localization signal motif. The span at 186-198 (CRPSMSISNQHLS) shows a compositional bias: polar residues. A DEUBAD domain is found at 229-338 (PDSILVNTNL…FENYYGQSSG (110 aa)). The short motif at 258 to 262 (LLLLL) is the LXXLL motif element. 2 disordered regions span residues 340-487 (SLED…AGLQ) and 516-535 (QESL…SSWE). A compositionally biased stretch (basic and acidic residues) spans 398–412 (QKEENQDEARPDSKS). Residues Ser-477, Ser-524, Ser-553, and Ser-590 each carry the phosphoserine modification. Arg-594 is modified (asymmetric dimethylarginine). Ser-601 carries the phosphoserine modification. Residues 643-652 (IPGPGPGGGQ) show a composition bias toward gly residues. Disordered stretches follow at residues 643 to 734 (IPGP…LASS), 805 to 891 (PKAG…SSIP), and 1103 to 1175 (GHAD…VSEQ). Composition is skewed to polar residues over residues 719–734 (AQLQ…LASS) and 830–839 (MTSSPVTTAS). The span at 849 to 870 (SGTATSTGSAPSSSTLPAASSL) shows a compositional bias: low complexity. Positions 871-891 (KTPGTSANMNGPISRTSSSIP) are enriched in polar residues. A compositionally biased stretch (acidic residues) spans 1119–1131 (DESDEDRVGDEQE). 2 positions are modified to phosphoserine: Ser-1121 and Ser-1254. The segment at 1332–1369 (PSKCYCRLKAMIMCKGCGAFCHDDCIGPSKLCVSCLVV) adopts a PHD-type; atypical zinc-finger fold.

The protein belongs to the Asx family. As to quaternary structure, core component of the polycomb repressive deubiquitinase (PR-DUB) complex, at least composed of BAP1, one of ASXL1, ASXL2 or (probably) ASXL3, and one of MBD5 or MBD6. Distinct combinations of ASXL and MBD proteins may preferentially bind specific histone modification marks. The PR-DUB core associates with a number of accessory proteins, including FOXK1, FOXK2, KDM1B, HCFC1 and OGT; KDM1B specifically associates with ASXL2 PR-DUB complexes. Interacts (via PHD domain) with MBD5 and MBD6 (via MBD domain); the interaction is probably direct and mediates association of MBD proteins with the PR-DUB core. Interacts with PPARA and PPARG.

Its subcellular location is the nucleus. Putative Polycomb group (PcG) protein. PcG proteins act by forming multiprotein complexes, which are required to maintain the transcriptionally repressive state of homeotic genes throughout development. PcG proteins are not required to initiate repression, but to maintain it during later stages of development. They probably act via methylation of histones, rendering chromatin heritably changed in its expressibility. Involved in transcriptional regulation mediated by ligand-bound nuclear hormone receptors, such as peroxisome proliferator-activated receptor gamma (PPARG). Acts as a coactivator for PPARG and enhances its adipocyte differentiation-inducing activity; the function seems to involve differential recruitment of acetylated and methylated histone H3. Non-catalytic component of the PR-DUB complex, a complex that specifically mediates deubiquitination of histone H2A monoubiquitinated at 'Lys-119' (H2AK119ub1). The PR-DUB complex is an epigenetic regulator of gene expression and acts as a transcriptional coactivator, affecting genes involved in development, cell communication, signaling, cell proliferation and cell viability. ASXL1, ASXL2 and ASXL3 function redundantly in the PR-DUB complex. The ASXL proteins are essential for chromatin recruitment and transcriptional activation of associated genes. ASXL1 and ASXL2 are important for BAP1 protein stability. This is Putative Polycomb group protein ASXL2 (Asxl2) from Mus musculus (Mouse).